A 133-amino-acid chain; its full sequence is Minor spike protein H (133 aa).

It belongs to the microviridae H protein family.

Its subcellular location is the virion. Functionally, probably triggers with protein G the injection of the phage DNA into the host upon conformational changes induced by virus-host receptor interaction. The polypeptide is Minor spike protein H (Spiroplasma virus 4 (SpV4)).